The sequence spans 91 residues: Cytochrome b-c1 complex subunit 6, mitochondrial (91 aa).

The transit peptide at 1 to 13 (MGLEDEQKMLTES) directs the protein to the mitochondrion. The segment at 1–30 (MGLEDEQKMLTESGDPEEEEEEEEELVDPL) is disordered. Residues 14 to 27 (GDPEEEEEEEEELV) show a composition bias toward acidic residues. Disulfide bonds link Cys37–Cys81 and Cys53–Cys67. Lys42 bears the N6-acetyllysine mark. An N6-acetyllysine modification is found at Lys85.

This sequence belongs to the UQCRH/QCR6 family. In terms of assembly, component of the ubiquinol-cytochrome c oxidoreductase (cytochrome b-c1 complex, complex III, CIII), a multisubunit enzyme composed of 11 subunits. The complex is composed of 3 respiratory subunits cytochrome b, cytochrome c1 and Rieske protein UQCRFS1, 2 core protein subunits UQCRC1/QCR1 and UQCRC2/QCR2, and 6 low-molecular weight protein subunits UQCRH/QCR6, UQCRB/QCR7, UQCRQ/QCR8, UQCR10/QCR9, UQCR11/QCR10 and subunit 9, the cleavage product of Rieske protein UQCRFS1. The complex exists as an obligatory dimer and forms supercomplexes (SCs) in the inner mitochondrial membrane with NADH-ubiquinone oxidoreductase (complex I, CI) and cytochrome c oxidase (complex IV, CIV), resulting in different assemblies (supercomplex SCI(1)III(2)IV(1) and megacomplex MCI(2)III(2)IV(2)).

The protein localises to the mitochondrion inner membrane. Its function is as follows. Component of the ubiquinol-cytochrome c oxidoreductase, a multisubunit transmembrane complex that is part of the mitochondrial electron transport chain which drives oxidative phosphorylation. The respiratory chain contains 3 multisubunit complexes succinate dehydrogenase (complex II, CII), ubiquinol-cytochrome c oxidoreductase (cytochrome b-c1 complex, complex III, CIII) and cytochrome c oxidase (complex IV, CIV), that cooperate to transfer electrons derived from NADH and succinate to molecular oxygen, creating an electrochemical gradient over the inner membrane that drives transmembrane transport and the ATP synthase. The cytochrome b-c1 complex catalyzes electron transfer from ubiquinol to cytochrome c, linking this redox reaction to translocation of protons across the mitochondrial inner membrane, with protons being carried across the membrane as hydrogens on the quinol. In the process called Q cycle, 2 protons are consumed from the matrix, 4 protons are released into the intermembrane space and 2 electrons are passed to cytochrome c. In Homo sapiens (Human), this protein is Cytochrome b-c1 complex subunit 6, mitochondrial (UQCRH).